Reading from the N-terminus, the 1014-residue chain is Isoleucine--tRNA ligase (1014 aa).

Residues 48–58 (PTANGRPGIHH) carry the 'HIGH' region motif. The 'KMSKS' region motif lies at 628 to 632 (KMSKS). Residue K631 participates in ATP binding.

The protein belongs to the class-I aminoacyl-tRNA synthetase family. IleS type 2 subfamily. Monomer. The cofactor is Zn(2+).

The protein localises to the cytoplasm. The enzyme catalyses tRNA(Ile) + L-isoleucine + ATP = L-isoleucyl-tRNA(Ile) + AMP + diphosphate. Its function is as follows. Catalyzes the attachment of isoleucine to tRNA(Ile). As IleRS can inadvertently accommodate and process structurally similar amino acids such as valine, to avoid such errors it has two additional distinct tRNA(Ile)-dependent editing activities. One activity is designated as 'pretransfer' editing and involves the hydrolysis of activated Val-AMP. The other activity is designated 'posttransfer' editing and involves deacylation of mischarged Val-tRNA(Ile). The chain is Isoleucine--tRNA ligase from Dehalococcoides mccartyi (strain ATCC BAA-2266 / KCTC 15142 / 195) (Dehalococcoides ethenogenes (strain 195)).